We begin with the raw amino-acid sequence, 500 residues long: MTEQTQDENKLIAERRAKLDHVRASCPANGHPNNFDRKHKAADIQAEYGQYSKEELEEMNVQRSIAGRIMAKRGPFLVIQDVSGRIQAYAGKDVQKDLKAKYQGLDIGDIIGVTGQLHLSGKGDLYVNMEEYQLLTKALRPLPEKFHGLTDQETRYRQRYVDLIVNEESRAAFIMRSKVVTAIRNFMVSKEFMEVETPMMHSIPGGASARPFITHHNALDIEMYLRIAPELYLKRLVVGGFERVFEINRNFRNEGLSPRHNPEFTMMEFYMAYADYKDLMDLTEEMLSSIAKDLLGDTKLPYGEHTIDFGGPYERLSMLDAIKKYNPDNETIQSMTYEEVKDVEFMRNLAKSLGMTIEKFWTCGQLLEEIFGETAEPKLMQPTFITGYPADISPLARRNDENHFITDRFEFFIGGREVANGFSELNDAEDQDKRFKAQVDAKDAGDDEAMFYDADYITALEHGLPPTAGQGIGIDRLVMLFTNTHTIRDVILFPAMRPQG.

Glu410 and Glu417 together coordinate Mg(2+).

It belongs to the class-II aminoacyl-tRNA synthetase family. As to quaternary structure, homodimer. The cofactor is Mg(2+).

It localises to the cytoplasm. It carries out the reaction tRNA(Lys) + L-lysine + ATP = L-lysyl-tRNA(Lys) + AMP + diphosphate. The protein is Lysine--tRNA ligase of Shewanella loihica (strain ATCC BAA-1088 / PV-4).